The following is a 217-amino-acid chain: GTPase IMAP family member GIMD1 (217 aa).

One can recognise an AIG1-type G domain in the interval 6–217 (KMIINLALFG…ENCYQVLTFK (212 aa)). Residues 15–23 (GMTQSGKSS), serine 36, and 148–150 (HAE) each bind GTP.

Belongs to the TRAFAC class TrmE-Era-EngA-EngB-Septin-like GTPase superfamily. AIG1/Toc34/Toc159-like paraseptin GTPase family. IAN subfamily.

The sequence is that of GTPase IMAP family member GIMD1 (GIMD1) from Homo sapiens (Human).